The sequence spans 64 residues: uncharacterized protein (64 aa).

This is an uncharacterized protein from Bos taurus (Bovine).